We begin with the raw amino-acid sequence, 525 residues long: Histidine-rich glycoprotein (525 aa).

Residues methionine 1–alanine 18 form the signal peptide. Cystatin domains are found at residues valine 19 to alanine 136 and asparagine 137 to glycine 254. 5 cysteine pairs are disulfide-bonded: cysteine 24/cysteine 504, cysteine 78/cysteine 89, cysteine 105/cysteine 126, cysteine 203/cysteine 417, and cysteine 218/cysteine 241. Positions arginine 41–lysine 84 are interaction with ATP5F1A. N-linked (GlcNAc...) asparagine glycosylation occurs at asparagine 63. Residue asparagine 125 is glycosylated (N-linked (GlcNAc...) asparagine). The tract at residues isoleucine 252–histidine 407 is disordered. Basic residues predominate over residues arginine 284–histidine 293. Residues proline 310–leucine 320 are compositionally biased toward pro residues. Polar residues predominate over residues serine 323–aspartate 348. N-linked (GlcNAc...) asparagine glycosylation is found at asparagine 344 and asparagine 345. The segment at aspartate 348–histidine 382 is necessary for endothelial cell focal adhesions and anti-angiogenic activities. Composition is skewed to basic residues over residues proline 351–proline 371 and glutamine 379–histidine 407.

As to quaternary structure, interacts (via the HRR domain) with TPM1; the interaction appears to contribute to the antiangiogenic properties of the HRR domain. Interacts with THBS2; the interaction blocks the antiangiogenic effect of THBS2 with CD36. Interacts with THBS1 (via the TSP type I repeats); the interaction blocks the antiangiogenic effect of THBS1 with CD3. Interacts with PLG (via its Kringle domains); the interaction tethers PLG to the cell surface and enhances its activation. Interacts with HPSE; the interaction is enhanced at acidic pH, partially inhibits binding of HPSE to cell surface receptors and modulates its enzymatic activity. Interacts (via the HRR domain) with TMP1; the interaction partially mediates the antiangiogenic properties of HRG. Interacts with kappa and lambda light chains of IgG molecules. Interacts with ATP5F1A; the interaction occurs on the surface of T-cells and alters their cell morphology in concert with CONA. Binds IgG molecules containing kappa and lambda light chains and inhibits the formation of insoluble immunoglobulin complexes. Interacts with F12; the interaction, which is enhanced in the presence of zinc ions and inhibited by heparin-binding to HRG, inhibits factor XII autoactivation and contact-initiated coagulation. Zn(2+) serves as cofactor. In terms of processing, proteolytic cleavage produces several HRG fragments which are mostly disulfide-linked and, therefore, not released. Cleavage by plasmin is inhibited in the presence of heparin, zinc ions or in an acidic environment. Cleavage reduces binding of HRG to heparan sulfate, but enhances the ability of HRG to bind and tether plasminogen to the cell surface. On platelet activation, releases a 33 kDa antiangiogenic peptide which encompasses the HRR. Also cleaved in the C-terminal by plasmin. Post-translationally, N-glycosylated. In terms of tissue distribution, expressed in macrophages and in malignant cells. Expressed by the liver and secreted in plasma (at protein level).

The protein resides in the secreted. Plasma glycoprotein that binds a number of ligands such as heme, heparin, heparan sulfate, thrombospondin, plasminogen, and divalent metal ions. Binds heparin and heparin/glycosaminoglycans in a zinc-dependent manner. Binds heparan sulfate on the surface of liver, lung, kidney and heart endothelial cells. Binds to N-sulfated polysaccharide chains on the surface of liver endothelial cells. Inhibits rosette formation. Acts as an adapter protein and is implicated in regulating many processes such as immune complex and pathogen clearance, cell chemotaxis, cell adhesion, angiogenesis, coagulation and fibrinolysis. Mediates clearance of necrotic cells through enhancing the phagocytosis of necrotic cells in a heparan sulfate-dependent pathway. This process can be regulated by the presence of certain HRG ligands such as heparin and zinc ions. Binds to IgG subclasses of immunoglobins containing kappa and lambda light chains with different affinities regulating their clearance and inhibiting the formation of insoluble immune complexes. Tethers plasminogen to the cell surface. Binds T-cells and alters the cell morphology. Modulates angiogenesis by blocking the CD6-mediated antiangiongenic effect of thrombospondins, THBS1 and THBS2. Acts as a regulator of the vascular endothelial growth factor (VEGF) signaling pathway; inhibits endothelial cell motility by reducing VEGF-induced complex formation between PXN/paxillin and ILK/integrin-linked protein kinase and by promoting inhibition of VEGF-induced tyrosine phosphorylation of focal adhesion kinases and alpha-actinins in endothelial cells. Also plays a role in the regulation of tumor angiogenesis and tumor immune surveillance. Normalizes tumor vessels and promotes antitumor immunity by polarizing tumor-associated macrophages, leading to decreased tumor growth and metastasis. The chain is Histidine-rich glycoprotein (HRG) from Homo sapiens (Human).